The sequence spans 265 residues: WUSCHEL-related homeobox 3B (265 aa).

Residues 4 to 68 constitute a DNA-binding region (homeobox; WUS-type); sequence TPSTRWCPTP…NHKARERQRL (65 aa). Disordered regions lie at residues 77 to 107 and 242 to 265; these read QQQY…APPA and PTKS…TSTN. Residues 254–265 show a composition bias toward low complexity; the sequence is SSKSSSCSTSTN.

It belongs to the WUS homeobox family. As to expression, predominantly expressed in tissues enriched for shoot meristems and young lateral organ primordia. First expressed in lateral domains of shoot meristems. It is then expressed in the margins of young lateral organ primordia. Not expressed in roots, seedling leaves or fully expanded coleoptiles. Also expressed in vegetative shoot apices (five leaf primordia and the SAM) and in the male inflorescence. Expressed at high level in the female inflorescence.

Its subcellular location is the nucleus. Functionally, probable transcription factor required to initiate organ founder cells in a lateral domain of shoot meristems. Involved in leaf formation. This Zea mays (Maize) protein is WUSCHEL-related homeobox 3B (WOX3B).